Here is an 88-residue protein sequence, read N- to C-terminus: Period circadian protein (88 aa).

The interval 23 to 88 is disordered; it reads VTNTSIAGTG…VTLTESLLNK (66 aa). 16 tandem repeats follow at residues 30 to 31, 33 to 34, 35 to 36, 37 to 38, 39 to 40, 41 to 42, 43 to 44, 45 to 46, 47 to 48, 49 to 50, 51 to 52, 53 to 54, 55 to 56, 57 to 58, 59 to 60, and 61 to 62. The 16 X 2 AA tandem repeats of G-[TN] stretch occupies residues 30–62; sequence GTGGTGTGTGTGTGTGTGTGTGTGTGTGTGTGN. Gly residues predominate over residues 30-62; that stretch reads GTGGTGTGTGTGTGTGTGTGTGTGTGTGTGTGN. The segment covering 79-88 has biased composition (polar residues); it reads VTLTESLLNK.

As to quaternary structure, forms a heterodimer with timeless (TIM); the complex then translocates into the nucleus. In terms of processing, phosphorylated with a circadian rhythmicity, probably by the double-time protein (dbt). Phosphorylation could be implicated in the stability of per monomer and in the formation of heterodimer per-tim.

It localises to the nucleus. The protein resides in the cytoplasm. It is found in the perinuclear region. In terms of biological role, essential for biological clock functions. Determines the period length of circadian and ultradian rhythms; an increase in PER dosage leads to shortened circadian rhythms and a decrease leads to lengthened circadian rhythms. Essential for the circadian rhythmicity of locomotor activity, eclosion behavior, and for the rhythmic component of the male courtship song that originates in the thoracic nervous system. The biological cycle depends on the rhythmic formation and nuclear localization of the TIM-PER complex. Light induces the degradation of TIM, which promotes elimination of PER. Nuclear activity of the heterodimer coordinatively regulates PER and TIM transcription through a negative feedback loop. Behaves as a negative element in circadian transcriptional loop. Does not appear to bind DNA, suggesting indirect transcriptional inhibition. The sequence is that of Period circadian protein (per) from Drosophila teissieri (Fruit fly).